Consider the following 170-residue polypeptide: Mitotic-spindle organizing protein 2B (170 aa).

Disordered regions lie at residues 1–26 and 102–170; these read MSRG…SPDA and SADS…GSST. Positions 8 to 20 are enriched in low complexity; sequence GSQAMASSQAAGP. Positions 123–132 are enriched in polar residues; that stretch reads PNPTTSTTQG. The span at 151–170 shows a compositional bias: low complexity; that stretch reads SGSRMQKSSSSGKSSGGSST.

The protein belongs to the MOZART2 family. As to quaternary structure, part of the gamma-tubulin complex. Interacts with TUBG1.

The protein resides in the cytoplasm. It localises to the cytoskeleton. Its subcellular location is the microtubule organizing center. The protein localises to the centrosome. It is found in the spindle. This Xenopus tropicalis (Western clawed frog) protein is Mitotic-spindle organizing protein 2B (mzt2b).